Consider the following 61-residue polypeptide: Photosystem II reaction center protein K (61 aa).

Residues Met1–Ala24 constitute a propeptide that is removed on maturation. Residues Met40–Phe60 form a helical membrane-spanning segment.

This sequence belongs to the PsbK family. As to quaternary structure, PSII is composed of 1 copy each of membrane proteins PsbA, PsbB, PsbC, PsbD, PsbE, PsbF, PsbH, PsbI, PsbJ, PsbK, PsbL, PsbM, PsbT, PsbX, PsbY, PsbZ, Psb30/Ycf12, at least 3 peripheral proteins of the oxygen-evolving complex and a large number of cofactors. It forms dimeric complexes.

It localises to the plastid. It is found in the chloroplast thylakoid membrane. One of the components of the core complex of photosystem II (PSII). PSII is a light-driven water:plastoquinone oxidoreductase that uses light energy to abstract electrons from H(2)O, generating O(2) and a proton gradient subsequently used for ATP formation. It consists of a core antenna complex that captures photons, and an electron transfer chain that converts photonic excitation into a charge separation. This is Photosystem II reaction center protein K from Sinapis alba (White mustard).